The primary structure comprises 157 residues: Probable Brix domain-containing ribosomal biogenesis protein (157 aa).

One can recognise a Brix domain in the interval 1-157 (MLVTTSRKPS…KFNIKGFKKY (157 aa)).

Probably involved in the biogenesis of the ribosome. The protein is Probable Brix domain-containing ribosomal biogenesis protein of Methanosarcina mazei (strain ATCC BAA-159 / DSM 3647 / Goe1 / Go1 / JCM 11833 / OCM 88) (Methanosarcina frisia).